The sequence spans 838 residues: Leucine--tRNA ligase 1 (838 aa).

Residues 40–51 (PYPSGAGLHVGH) carry the 'HIGH' region motif. A 'KMSKS' region motif is present at residues 608–612 (KMSKS). ATP is bound at residue K611.

Belongs to the class-I aminoacyl-tRNA synthetase family.

The protein resides in the cytoplasm. It catalyses the reaction tRNA(Leu) + L-leucine + ATP = L-leucyl-tRNA(Leu) + AMP + diphosphate. In Rhizobium johnstonii (strain DSM 114642 / LMG 32736 / 3841) (Rhizobium leguminosarum bv. viciae), this protein is Leucine--tRNA ligase 1.